The following is a 661-amino-acid chain: DNA cross-link repair protein PSO2/SNM1 (661 aa).

Residues 1 to 44 (MSRKSIVQIRRSEVKRKRSSTASSTSEGKTLHKNTHTSSKRQRT) form a disordered region. The span at 31–43 (LHKNTHTSSKRQR) shows a compositional bias: basic residues. The UBZ4-type zinc finger occupies 144-174 (VIQCPICLENLSHLELYERETHCDTCIGSDP). Zn(2+)-binding residues include C147, C150, H165, and C169.

It belongs to the DNA repair metallo-beta-lactamase (DRMBL) family.

The protein resides in the nucleus. In terms of biological role, required for DNA interstrand cross-link repair. This requires cleavage of cross-linked DNA to generate DNA double strand breaks (DSBs). This protein has 5' exonuclease activity on single-stranded and double-stranded DNA, which appears to be necessary for the processing of DNA double strand breaks prior to ligation. The chain is DNA cross-link repair protein PSO2/SNM1 (PSO2) from Saccharomyces cerevisiae (strain ATCC 204508 / S288c) (Baker's yeast).